The primary structure comprises 173 residues: Crossover junction endodeoxyribonuclease RuvC (173 aa).

Active-site residues include Asp8, Glu67, and Asp139. The Mg(2+) site is built by Asp8, Glu67, and Asp139.

This sequence belongs to the RuvC family. In terms of assembly, homodimer which binds Holliday junction (HJ) DNA. The HJ becomes 2-fold symmetrical on binding to RuvC with unstacked arms; it has a different conformation from HJ DNA in complex with RuvA. In the full resolvosome a probable DNA-RuvA(4)-RuvB(12)-RuvC(2) complex forms which resolves the HJ. It depends on Mg(2+) as a cofactor.

It localises to the cytoplasm. The catalysed reaction is Endonucleolytic cleavage at a junction such as a reciprocal single-stranded crossover between two homologous DNA duplexes (Holliday junction).. Its function is as follows. The RuvA-RuvB-RuvC complex processes Holliday junction (HJ) DNA during genetic recombination and DNA repair. Endonuclease that resolves HJ intermediates. Cleaves cruciform DNA by making single-stranded nicks across the HJ at symmetrical positions within the homologous arms, yielding a 5'-phosphate and a 3'-hydroxyl group; requires a central core of homology in the junction. The consensus cleavage sequence is 5'-(A/T)TT(C/G)-3'. Cleavage occurs on the 3'-side of the TT dinucleotide at the point of strand exchange. HJ branch migration catalyzed by RuvA-RuvB allows RuvC to scan DNA until it finds its consensus sequence, where it cleaves and resolves the cruciform DNA. The protein is Crossover junction endodeoxyribonuclease RuvC of Salmonella choleraesuis (strain SC-B67).